A 366-amino-acid chain; its full sequence is MAGPAWISKVSRLLGAFHNPKQVTRGFTGGVQTVTLIPGDGIGPEISAAVMKIFDAAKAPIQWEERNVTAIQGPGGKWMIPSEAKESMDKNKMGLKGPLKTPIAAGHPSMNLLLRKTFDLYANVRPCVSIEGYKTPYTDVNIVTIRENTEGEYSGIEHVIVDGVVQSIKLITEGASKRIAEFAFEYARNNHRSNVTAVHKANIMRMSDGLFLQKCREVAESCKDIKFNEMYLDTVCLNMVQDPSQFDVLVMPNLYGDILSDLCAGLIGGLGVTPSGNIGANGVAIFESVHGTAPDIAGKDMANPTALLLSAVMMLRHMGLFDHAARIEAACFATIKDGKSLTKDLGGNAKCSDFTEEICRRVKDLD.

The N-terminal 27 residues, 1–27 (MAGPAWISKVSRLLGAFHNPKQVTRGF), are a transit peptide targeting the mitochondrion. N6-succinyllysine is present on Lys-77. The residue at position 101 (Thr-101) is a Phosphothreonine. The substrate site is built by Arg-115, Arg-125, and Arg-146. Lys-223 is subject to N6-acetyllysine. The Mg(2+) site is built by Asp-233, Asp-257, and Asp-261. Lys-343 bears the N6-acetyllysine; alternate mark. Lys-343 carries the post-translational modification N6-succinyllysine; alternate. At Lys-350 the chain carries N6-succinyllysine.

Belongs to the isocitrate and isopropylmalate dehydrogenases family. As to quaternary structure, heterooligomer of subunits alpha (IDH3A), beta (IDH3B), and gamma (IDH3G) in the apparent ratio of 2:1:1. The heterodimer containing one IDH3A and one IDH3B subunit and the heterodimer containing one IDH3A and one IDH3G subunit assemble into a heterotetramer (which contains two subunits of IDH3A, one of IDH3B and one of IDH3G) and further into the heterooctamer. The cofactor is Mg(2+). It depends on Mn(2+) as a cofactor.

Its subcellular location is the mitochondrion. It carries out the reaction D-threo-isocitrate + NAD(+) = 2-oxoglutarate + CO2 + NADH. With respect to regulation, the heterotetramer and the heterodimer composed of IDH3A and IDH3G subunits can be allosterically activated by citrate (CIT) or/and ADP, and the two activators can act independently or synergistically. The heterodimer composed of IDH3A and IDH3B subunits cannot be allosterically regulated and the allosteric regulation of the heterotetramer is through the IDH3G subunit and not the IDH3B subunit. The IDH3G subunit contains the allosteric site which consists of a CIT-binding site and an ADP-binding site, and the binding of CIT and ADP causes conformational changes at the allosteric site which are transmitted to the active site in the catalytic subunit (IDH3A) through a cascade of conformational changes at the heterodimer interface, leading to stabilization of the isocitrate-binding at the active site and thus activation of the enzyme. ATP can activate the heterotetramer and the heterodimer composed of IDH3A and IDH3G subunits at low concentrations but inhibits their activities at high concentrations, whereas ATP exhibits only inhibitory effect on the heterodimer composed of IDH3A and IDH3B subunits. In terms of biological role, catalytic subunit of the enzyme which catalyzes the decarboxylation of isocitrate (ICT) into alpha-ketoglutarate. The heterodimer composed of the alpha (IDH3A) and beta (IDH3B) subunits and the heterodimer composed of the alpha (IDH3A) and gamma (IDH3G) subunits, have considerable basal activity but the full activity of the heterotetramer (containing two subunits of IDH3A, one of IDH3B and one of IDH3G) requires the assembly and cooperative function of both heterodimers. The polypeptide is Isocitrate dehydrogenase [NAD] subunit alpha, mitochondrial (Homo sapiens (Human)).